A 1060-amino-acid polypeptide reads, in one-letter code: FACT complex subunit SPT16 (1060 aa).

Residues 458–490 (FNDDNETQKENNNNNNKRPGLSQTSNTTALKLE) are disordered. Positions 478-490 (LSQTSNTTALKLE) are enriched in polar residues. Residues 508–532 (NADDANSEKLRQEIQIKLHEKRLQE) adopt a coiled-coil conformation. The disordered stretch occupies residues 977–1060 (QGESDEEEES…AKADRNSGFD (84 aa)). Composition is skewed to acidic residues over residues 979–990 (ESDEEEESDEES) and 997–1044 (EDPQ…EDWD). Basic and acidic residues predominate over residues 1045 to 1060 (ALERKAAKADRNSGFD).

This sequence belongs to the peptidase M24 family. SPT16 subfamily. In terms of assembly, forms a stable heterodimer with POB3. The SPT16-POB3 dimer weakly associates with multiple molecules of NHP6 to form the FACT complex.

The protein resides in the nucleus. Its subcellular location is the chromosome. In terms of biological role, component of the FACT complex, a general chromatin factor that acts to reorganize nucleosomes. The FACT complex is involved in multiple processes that require DNA as a template such as mRNA elongation, DNA replication and DNA repair. During transcription elongation the FACT complex acts as a histone chaperone that both destabilizes and restores nucleosomal structure. It facilitates the passage of RNA polymerase II and transcription by promoting the dissociation of one histone H2A-H2B dimer from the nucleosome, then subsequently promotes the reestablishment of the nucleosome following the passage of RNA polymerase II. The polypeptide is FACT complex subunit SPT16 (CDC68) (Candida albicans (strain SC5314 / ATCC MYA-2876) (Yeast)).